The following is an 822-amino-acid chain: Epidermal growth factor receptor kinase substrate 8 (822 aa).

2 stretches are compositionally biased toward polar residues: residues 1-10 and 17-30; these read MNGHISNHPS and SQMNGYGSSPTFSQ. A disordered region spans residues 1–39; the sequence is MNGHISNHPSSFGMYPSQMNGYGSSPTFSQTDREHGSKT. Residue Ser-58 is modified to Phosphoserine. Positions 64–194 constitute a PTB domain; it reads QYRVEHLTTF…SDSKGGKQKR (131 aa). 2 disordered regions span residues 202–225 and 298–320; these read ISNADPSIPPPPRAPAPAPPGTVT and SKRKKNKKGKRKGPGEGVLTLRA. The segment covering 208-221 has biased composition (pro residues); sequence SIPPPPRAPAPAPP. At Thr-223 the chain carries Phosphothreonine. A compositionally biased stretch (basic residues) spans 299–309; sequence KRKKNKKGKRK. Thr-317 bears the Phosphothreonine mark. The residue at position 476 (Ser-476) is a Phosphoserine. Residues 531-590 enclose the SH3 domain; it reads QPKKYAKSKYDFVARNNSELSVLKDDILEILDDRKQWWKVRNASGDSGFVPNNILDIVRP. The interval 612–689 is disordered; sequence EYGPRPADTP…VDRRKSQMEE (78 aa). The span at 618-645 shows a compositional bias: pro residues; the sequence is ADTPPAPSPPPTPAPVPVPLPPSTPAPV. Ser-625 carries the phosphoserine modification. Thr-629 is subject to Phosphothreonine; by MAPK. An effector region region spans residues 649 to 822; that stretch reads KVPANITRQN…VESFDEGSSH (174 aa). Ser-659, Ser-662, and Ser-685 each carry phosphoserine. Over residues 671–687 the composition is skewed to basic and acidic residues; the sequence is DSQRHKQLPVDRRKSQM. Residues 680–698 are amphipathic helix; sequence VDRRKSQMEEVQDELIHRL. Helix bundle regions lie at residues 718 to 738, 752 to 757, 762 to 767, and 766 to 785; these read VINITYDSTPEDVKTWLQSKG, GAQLFS, ELRTVC, and VCPEGARVYSQITVQKAALE. The disordered stretch occupies residues 787–822; it reads SSGSSELQEIMRRRQEKISAAASDSGVESFDEGSSH. 2 positions are modified to phosphoserine: Ser-811 and Ser-815.

The protein belongs to the EPS8 family. Homodimer. Part of a complex consisting of ABI1, EPS8 and SOS1. Interacts with MYO15A and WHRN. Interacts with LANCL1. Interacts with EGFR; mediates EPS8 phosphorylation. Interacts with BAIAP2. Interacts with SHB. Ubiquitinated by the SCF(FBXW5) E3 ubiquitin-protein ligase complex during G2 phase, leading to its transient degradation and subsequent cell shape changes required to allow mitotic progression. Reappears at the midzone of dividing cells. In terms of processing, phosphorylation at Ser-625 and Thr-629 by MAPK following BDNF treatment promotes removal from actin and filopodia formation. Phosphorylated by several receptor tyrosine kinases. As to expression, expressed in all tissues analyzed, including heart, brain, placenta, lung, liver, skeletal muscle, kidney and pancreas. Expressed in all epithelial and fibroblastic lines examined and in some, but not all, hematopoietic cells.

The protein localises to the cytoplasm. It localises to the cell cortex. It is found in the cell projection. Its subcellular location is the ruffle membrane. The protein resides in the growth cone. The protein localises to the stereocilium. It localises to the synapse. It is found in the synaptosome. In terms of biological role, signaling adapter that controls various cellular protrusions by regulating actin cytoskeleton dynamics and architecture. Depending on its association with other signal transducers, can regulate different processes. Together with SOS1 and ABI1, forms a trimeric complex that participates in transduction of signals from Ras to Rac by activating the Rac-specific guanine nucleotide exchange factor (GEF) activity. Acts as a direct regulator of actin dynamics by binding actin filaments and has both barbed-end actin filament capping and actin bundling activities depending on the context. Displays barbed-end actin capping activity when associated with ABI1, thereby regulating actin-based motility process: capping activity is auto-inhibited and inhibition is relieved upon ABI1 interaction. Also shows actin bundling activity when associated with BAIAP2, enhancing BAIAP2-dependent membrane extensions and promoting filopodial protrusions. Involved in the regulation of processes such as axonal filopodia growth, stereocilia length, dendritic cell migration and cancer cell migration and invasion. Acts as a regulator of axonal filopodia formation in neurons: in the absence of neurotrophic factors, negatively regulates axonal filopodia formation via actin-capping activity. In contrast, it is phosphorylated in the presence of BDNF leading to inhibition of its actin-capping activity and stimulation of filopodia formation. Component of a complex with WHRN and MYO15A that localizes at stereocilia tips and is required for elongation of the stereocilia actin core. Indirectly involved in cell cycle progression; its degradation following ubiquitination being required during G2 phase to promote cell shape changes. The protein is Epidermal growth factor receptor kinase substrate 8 (EPS8) of Homo sapiens (Human).